A 263-amino-acid chain; its full sequence is Small ribosomal subunit protein uS2 (263 aa).

Belongs to the universal ribosomal protein uS2 family.

The polypeptide is Small ribosomal subunit protein uS2 (Hyphomonas neptunium (strain ATCC 15444)).